Here is a 191-residue protein sequence, read N- to C-terminus: Holliday junction branch migration complex subunit RuvA (191 aa).

The interval Met-1–Gly-64 is domain I. The interval Thr-65–Gly-137 is domain II. Residues Gly-137 to Ala-141 form a flexible linker region. Positions Val-142–Ala-191 are domain III.

The protein belongs to the RuvA family. As to quaternary structure, homotetramer. Forms an RuvA(8)-RuvB(12)-Holliday junction (HJ) complex. HJ DNA is sandwiched between 2 RuvA tetramers; dsDNA enters through RuvA and exits via RuvB. An RuvB hexamer assembles on each DNA strand where it exits the tetramer. Each RuvB hexamer is contacted by two RuvA subunits (via domain III) on 2 adjacent RuvB subunits; this complex drives branch migration. In the full resolvosome a probable DNA-RuvA(4)-RuvB(12)-RuvC(2) complex forms which resolves the HJ.

Its subcellular location is the cytoplasm. The RuvA-RuvB-RuvC complex processes Holliday junction (HJ) DNA during genetic recombination and DNA repair, while the RuvA-RuvB complex plays an important role in the rescue of blocked DNA replication forks via replication fork reversal (RFR). RuvA specifically binds to HJ cruciform DNA, conferring on it an open structure. The RuvB hexamer acts as an ATP-dependent pump, pulling dsDNA into and through the RuvAB complex. HJ branch migration allows RuvC to scan DNA until it finds its consensus sequence, where it cleaves and resolves the cruciform DNA. The protein is Holliday junction branch migration complex subunit RuvA of Janthinobacterium sp. (strain Marseille) (Minibacterium massiliensis).